Reading from the N-terminus, the 140-residue chain is Ribonuclease P protein component (140 aa).

This sequence belongs to the RnpA family. As to quaternary structure, consists of a catalytic RNA component (M1 or rnpB) and a protein subunit.

The enzyme catalyses Endonucleolytic cleavage of RNA, removing 5'-extranucleotides from tRNA precursor.. In terms of biological role, RNaseP catalyzes the removal of the 5'-leader sequence from pre-tRNA to produce the mature 5'-terminus. It can also cleave other RNA substrates such as 4.5S RNA. The protein component plays an auxiliary but essential role in vivo by binding to the 5'-leader sequence and broadening the substrate specificity of the ribozyme. In Nostoc punctiforme (strain ATCC 29133 / PCC 73102), this protein is Ribonuclease P protein component.